The following is a 524-amino-acid chain: Phenylalanine--tRNA ligase alpha subunit (524 aa).

Thr-362, Tyr-441, and Phe-467 together coordinate L-phenylalanine.

This sequence belongs to the class-II aminoacyl-tRNA synthetase family. Phe-tRNA synthetase alpha subunit type 2 subfamily. As to quaternary structure, tetramer of two alpha and two beta subunits. Requires Mg(2+) as cofactor.

The protein localises to the cytoplasm. It catalyses the reaction tRNA(Phe) + L-phenylalanine + ATP = L-phenylalanyl-tRNA(Phe) + AMP + diphosphate + H(+). The polypeptide is Phenylalanine--tRNA ligase alpha subunit (Methanopyrus kandleri (strain AV19 / DSM 6324 / JCM 9639 / NBRC 100938)).